The following is a 447-amino-acid chain: N-succinylarginine dihydrolase (447 aa).

Residues 19-28, Asn-110, and 137-138 each bind substrate; these read AGLSFGNEAS and HR. Glu-174 is a catalytic residue. Arg-212 serves as a coordination point for substrate. His-248 is a catalytic residue. Positions 250 and 359 each coordinate substrate. Cys-365 serves as the catalytic Nucleophile.

Belongs to the succinylarginine dihydrolase family. Homodimer.

It catalyses the reaction N(2)-succinyl-L-arginine + 2 H2O + 2 H(+) = N(2)-succinyl-L-ornithine + 2 NH4(+) + CO2. Its pathway is amino-acid degradation; L-arginine degradation via AST pathway; L-glutamate and succinate from L-arginine: step 2/5. Catalyzes the hydrolysis of N(2)-succinylarginine into N(2)-succinylornithine, ammonia and CO(2). The protein is N-succinylarginine dihydrolase of Escherichia coli O6:K15:H31 (strain 536 / UPEC).